Reading from the N-terminus, the 446-residue chain is Argininosuccinate synthase (446 aa).

Residues 17 to 25 and Ala43 contribute to the ATP site; that span reads AFSGGLDTS. Tyr99 is a binding site for L-citrulline. ATP-binding residues include Gly129 and Thr131. L-aspartate-binding residues include Thr131, Asn135, and Asp136. Asn135 contacts L-citrulline. An ATP-binding site is contributed by Asp136. Positions 139 and 192 each coordinate L-citrulline. Position 194 (Asp194) interacts with ATP. L-citrulline contacts are provided by Thr201, Glu203, and Glu280.

This sequence belongs to the argininosuccinate synthase family. Type 2 subfamily. Homotetramer.

It localises to the cytoplasm. It catalyses the reaction L-citrulline + L-aspartate + ATP = 2-(N(omega)-L-arginino)succinate + AMP + diphosphate + H(+). The protein operates within amino-acid biosynthesis; L-arginine biosynthesis; L-arginine from L-ornithine and carbamoyl phosphate: step 2/3. The chain is Argininosuccinate synthase from Burkholderia thailandensis (strain ATCC 700388 / DSM 13276 / CCUG 48851 / CIP 106301 / E264).